The following is a 254-amino-acid chain: 3-deoxy-manno-octulosonate cytidylyltransferase (254 aa).

It belongs to the KdsB family.

The protein localises to the cytoplasm. It catalyses the reaction 3-deoxy-alpha-D-manno-oct-2-ulosonate + CTP = CMP-3-deoxy-beta-D-manno-octulosonate + diphosphate. It participates in nucleotide-sugar biosynthesis; CMP-3-deoxy-D-manno-octulosonate biosynthesis; CMP-3-deoxy-D-manno-octulosonate from 3-deoxy-D-manno-octulosonate and CTP: step 1/1. It functions in the pathway bacterial outer membrane biogenesis; lipopolysaccharide biosynthesis. Its function is as follows. Activates KDO (a required 8-carbon sugar) for incorporation into bacterial lipopolysaccharide in Gram-negative bacteria. The chain is 3-deoxy-manno-octulosonate cytidylyltransferase from Polynucleobacter asymbioticus (strain DSM 18221 / CIP 109841 / QLW-P1DMWA-1) (Polynucleobacter necessarius subsp. asymbioticus).